We begin with the raw amino-acid sequence, 1186 residues long: MDISTRSKDPGSAERTAQKRKFPSPPHSSNGHSPQDTSTSPIKKKKKPGLLNSNNKEQSELRHGPFYYMKQPLTTDPVDVVPQDGRNDFYCWVCHREGQVLCCELCPRVYHAKCLRLTSEPEGDWFCPECEKITVAECIETQSKAMTMLTIEQLSYLLKFAIQKMKQPGTDAFQKPVPLEQHPDYAEYIFHPMDLCTLEKNAKKKMYGCTEAFLADAKWILHNCIIYNGGNHKLTQIAKVVIKICEHEMNEIEVCPECYLAACQKRDNWFCEPCSNPHPLVWAKLKGFPFWPAKALRDKDGQVDARFFGQHDRAWVPINNCYLMSKEIPFSVKKTKSIFNSAMQEMEVYVENIRRKFGVFNYSPFRTPYTPNSQYQMLLDPTNPSAGTAKIDKQEKVKLNFDMTASPKILMSKPVLSGGTGRRISLSDMPRSPMSTNSSVHTGSDVEQDAEKKATSSHFSASEESMDFLDKSTASPASTKTGQAGSLSGSPKPFSPQLSAPITTKTDKTSTTGSILNLNLDRSKAEMDLKELSESVQQQSTPVPLISPKRQIRSRFQLNLDKTIESCKAQLGINEISEDVYTAVEHSDSEDSEKSDSSDSEYISDDEQKSKNEPEDTEDKEGCQMDKEPSAVKKKPKPTNPVEIKEELKSTSPASEKADPGAVKDKASPEPEKDFSEKAKPSPHPIKDKLKGKDETDSPTVHLGLDSDSESELVIDLGEDHSGREGRKNKKEPKEPSPKQDVVGKTPPSTTVGSHSPPETPVLTRSSAQTSAAGATATTSTSSTVTVTAPAPAATGSPVKKQRPLLPKETAPAVQRVVWNSSSKFQTSSQKWHMQKMQRQQQQQQQQNQQQQPQSSQGTRYQTRQAVKAVQQKEITQSPSTSTITLVTSTQSSPLVTSSGSMSTLVSSVNADLPIATASADVAADIAKYTSKMMDAIKGTMTEIYNDLSKNTTGSTIAEIRRLRIEIEKLQWLHQQELSEMKHNLELTMAEMRQSLEQERDRLIAEVKKQLELEKQQAVDETKKKQWCANCKKEAIFYCCWNTSYCDYPCQQAHWPEHMKSCTQSATAPQQEADAEVNTETLNKSSQGSSSSTQSAPSETASASKEKETSAEKSKESGSTLDLSGSRETPSSILLGSNQGSDHSRSNKSSWSSSDEKRGSTRSDHNTSTSTKSLLPKESRLDTFWD.

Over residues 1–12 (MDISTRSKDPGS) the composition is skewed to basic and acidic residues. The disordered stretch occupies residues 1 to 57 (MDISTRSKDPGSAERTAQKRKFPSPPHSSNGHSPQDTSTSPIKKKKKPGLLNSNNKE). The segment at 1 to 850 (MDISTRSKDP…QQQQQQQNQQ (850 aa)) is required for interaction with CCNT1. Ser-12 participates in a covalent cross-link: Glycyl lysine isopeptide (Lys-Gly) (interchain with G-Cter in SUMO2). Ser-24 is modified (phosphoserine). Residues Lys-56 and Lys-70 each participate in a glycyl lysine isopeptide (Lys-Gly) (interchain with G-Cter in SUMO2) cross-link. Positions 75 to 268 (TDPVDVVPQD…YLAACQKRDN (194 aa)) are interaction with histone H3K4me0. Residues 75-406 (TDPVDVVPQD…VKLNFDMTAS (332 aa)) form an interaction with histone H3K14ac region. Residues 88-133 (DFYCWVCHREGQVLCCELCPRVYHAKCLRLTSEPEGDWFCPECEKI) form a PHD-type zinc finger. The interval 88–327 (DFYCWVCHRE…INNCYLMSKE (240 aa)) is required for interaction with histone H3 and histone H4. Residues Cys-91, Cys-94, Cys-103, Cys-106, His-111, Cys-114, Cys-127, and Cys-130 each contribute to the Zn(2+) site. One can recognise a Bromo domain in the interval 145-252 (AMTMLTIEQL…KICEHEMNEI (108 aa)). Residues Cys-255, Cys-258, and Cys-274 each coordinate Zn(2+). The PWWP domain maps to 277–327 (PHPLVWAKLKGFPFWPAKALRDKDGQVDARFFGQHDRAWVPINNCYLMSKE). Lys-390 participates in a covalent cross-link: Glycyl lysine isopeptide (Lys-Gly) (interchain with G-Cter in SUMO2). Thr-404 is subject to Phosphothreonine. At Ser-406 the chain carries Phosphoserine. The segment at 412–512 (SKPVLSGGTG…TTKTDKTSTT (101 aa)) is disordered. Position 413 is an N6-acetyllysine; alternate (Lys-413). A Glycyl lysine isopeptide (Lys-Gly) (interchain with G-Cter in SUMO2); alternate cross-link involves residue Lys-413. Phosphoserine is present on residues Ser-417, Ser-425, and Ser-432. Polar residues predominate over residues 433–442 (PMSTNSSVHT). The residue at position 444 (Ser-444) is a Phosphoserine. Lys-453 participates in a covalent cross-link: Glycyl lysine isopeptide (Lys-Gly) (interchain with G-Cter in SUMO2). A phosphoserine mark is found at Ser-460, Ser-462, Ser-465, Ser-486, Ser-490, and Ser-495. A compositionally biased stretch (polar residues) spans 472 to 489 (STASPASTKTGQAGSLSG). A Glycyl lysine isopeptide (Lys-Gly) (interchain with G-Cter in SUMO2) cross-link involves residue Lys-505. Residues Ser-514 and Ser-523 each carry the phosphoserine modification. Lys-530 participates in a covalent cross-link: Glycyl lysine isopeptide (Lys-Gly) (interchain with G-Cter in SUMO2). Residue Thr-541 is modified to Phosphothreonine. Phosphoserine is present on Ser-547. Lys-549 participates in a covalent cross-link: Glycyl lysine isopeptide (Lys-Gly) (interchain with G-Cter in SUMO2). Position 563 is a phosphothreonine (Thr-563). The interval 582-884 (TAVEHSDSED…ITQSPSTSTI (303 aa)) is disordered. Basic and acidic residues-rich tracts occupy residues 585 to 597 (EHSD…KSDS) and 606 to 631 (DEQK…EPSA). Glycyl lysine isopeptide (Lys-Gly) (interchain with G-Cter in SUMO2) cross-links involve residues Lys-611 and Lys-645. Phosphoserine is present on residues Ser-652 and Ser-655. Residues 656-696 (EKADPGAVKDKASPEPEKDFSEKAKPSPHPIKDKLKGKDET) show a composition bias toward basic and acidic residues. Lys-657 is covalently cross-linked (Glycyl lysine isopeptide (Lys-Gly) (interchain with G-Cter in SUMO2)). Phosphoserine is present on residues Ser-668, Ser-682, Ser-707, Ser-709, and Ser-737. Over residues 718 to 738 (GEDHSGREGRKNKKEPKEPSP) the composition is skewed to basic and acidic residues. Residue Thr-746 is modified to Phosphothreonine. Residues Ser-754 and Ser-756 each carry the phosphoserine modification. Low complexity predominate over residues 766-799 (SSAQTSAAGATATTSTSSTVTVTAPAPAATGSPV). Positions 818–832 (VWNSSSKFQTSSQKW) are enriched in polar residues. Residues 835 to 857 (QKMQRQQQQQQQQNQQQQPQSSQ) are compositionally biased toward low complexity. Over residues 873–884 (KEITQSPSTSTI) the composition is skewed to polar residues. Positions 875–1047 (ITQSPSTSTI…YCCWNTSYCD (173 aa)) are required for homodimerization. Positions 1028, 1031, 1039, 1040, 1046, 1050, 1058, and 1062 each coordinate Zn(2+). An MYND-type zinc finger spans residues 1028-1062 (CANCKKEAIFYCCWNTSYCDYPCQQAHWPEHMKSC). The tract at residues 1028–1062 (CANCKKEAIFYCCWNTSYCDYPCQQAHWPEHMKSC) is required for recruitment to DNA damage sites and for interaction with the NuRD complex, CHD4, HDAC1, HDAC2 and KDM1A. Positions 1071 to 1186 (QEADAEVNTE…KESRLDTFWD (116 aa)) are disordered. Over residues 1085–1103 (SSQGSSSSTQSAPSETASA) the composition is skewed to low complexity. The segment covering 1104-1116 (SKEKETSAEKSKE) has biased composition (basic and acidic residues). Lys-1115 participates in a covalent cross-link: Glycyl lysine isopeptide (Lys-Gly) (interchain with G-Cter in SUMO2). Ser-1119 is subject to Phosphoserine. Polar residues predominate over residues 1121–1140 (LDLSGSRETPSSILLGSNQG). Position 1141 is a phosphoserine (Ser-1141). An interaction with PRKCB1 region spans residues 1147 to 1186 (NKSSWSSSDEKRGSTRSDHNTSTSTKSLLPKESRLDTFWD). 2 stretches are compositionally biased toward basic and acidic residues: residues 1154-1165 (SDEKRGSTRSDH) and 1175-1186 (LPKESRLDTFWD).

Monomer and homodimer. Interacts with NuRD subcomplexes containing GATAD2A. Interacts with the histone deacetylase NuRD complex subunit CHD4; the interaction is direct, appears to occur with monomeric ZMYND8, and is increased following DNA damage. Interacts (via N-terminus) with the P-TEFb complex subunit CCNT1 (via central region); the interaction is direct and the association appears to occur between homodimeric ZMYND8 and the activated form of the P-TEFb complex. Interacts (via N-terminus) with DBN1 (via ADF-H domain); the interaction leads to sequestering of ZMYND8 in the cytoplasm. Interacts with the P-TEFb complex subunit CDK9; the association appears to occur between homodimeric ZMYND8 and the activated form of the P-TEFb complex. Interacts with EZH2; the interaction is dependent on the presence of chromatin. Interacts (via MYND domain) with the NuRD complex subunit GATAD2A. Interacts with histone H3 (via N-terminus) that is both methylated at 'Lys-4' (H3K4me1) and acetylated at 'Lys-14' (H3K14ac), with histone H3 (via N-terminus) unmodified at 'Lys-4' (H3K4me0) and acetylated at 'Lys-14' (H3K14ac), and with histone H3 (via N-terminus) di-methylated at 'Lys-36' (H3K36me2). Interacts (via Bromo domain) with histone H4 acetylated at 'Lys-16' (H4K16ac). Interacts with HDAC1. Interacts with HDAC2. Interacts with KDM1A. Interacts with KDM5C. Interacts with KDM5D. Interacts in vitro with PRKCB. Interacts with RNA polymerase II subunit POLR2A phosphorylated at 'Ser-5'. Interacts with ZNF592. Interacts with ZNF687. Does not interact with GATAD2B. Expressed in neurons (at protein level). Absent in astrocytes (at protein level). Expressed in all tissues examined with highest expression in brain, lung, pancreas, and placenta. Expressed in cutaneous T-cell lymphomas (CTCL).

It is found in the nucleus. It localises to the chromosome. The protein resides in the cytoplasm. Functionally, chromatin reader that recognizes dual histone modifications such as histone H3.1 dimethylated at 'Lys-36' and histone H4 acetylated at 'Lys-16' (H3.1K36me2-H4K16ac) and histone H3 methylated at 'Lys-4' and histone H4 acetylated at 'Lys-14' (H3K4me1-H3K14ac). May act as a transcriptional corepressor for KDM5D by recognizing the dual histone signature H3K4me1-H3K14ac. May also act as a transcriptional corepressor for KDM5C and EZH2. Recognizes acetylated histone H4 and recruits the NuRD chromatin remodeling complex to damaged chromatin for transcriptional repression and double-strand break repair by homologous recombination. Also activates transcription elongation by RNA polymerase II through recruiting the P-TEFb complex to target promoters. Localizes to H3.1K36me2-H4K16ac marks at all-trans-retinoic acid (ATRA)-responsive genes and positively regulates their expression. Promotes neuronal differentiation by associating with regulatory regions within the MAPT gene, to enhance transcription of a protein-coding MAPT isoform and suppress the non-coding MAPT213 isoform. Suppresses breast cancer, and prostate cancer cell invasion and metastasis. The chain is MYND-type zinc finger-containing chromatin reader ZMYND8 (ZMYND8) from Homo sapiens (Human).